A 360-amino-acid polypeptide reads, in one-letter code: 3-dehydroquinate synthase (360 aa).

NAD(+)-binding positions include 69–74 (DGEAYK), 103–107 (GVIGD), 127–128 (TT), Lys140, Lys149, and 167–170 (CLQT). Residues Glu182, His245, and His262 each contribute to the Zn(2+) site.

Belongs to the sugar phosphate cyclases superfamily. Dehydroquinate synthase family. Requires Co(2+) as cofactor. Zn(2+) is required as a cofactor. The cofactor is NAD(+).

The protein localises to the cytoplasm. It catalyses the reaction 7-phospho-2-dehydro-3-deoxy-D-arabino-heptonate = 3-dehydroquinate + phosphate. Its pathway is metabolic intermediate biosynthesis; chorismate biosynthesis; chorismate from D-erythrose 4-phosphate and phosphoenolpyruvate: step 2/7. Its function is as follows. Catalyzes the conversion of 3-deoxy-D-arabino-heptulosonate 7-phosphate (DAHP) to dehydroquinate (DHQ). In Aeromonas hydrophila subsp. hydrophila (strain ATCC 7966 / DSM 30187 / BCRC 13018 / CCUG 14551 / JCM 1027 / KCTC 2358 / NCIMB 9240 / NCTC 8049), this protein is 3-dehydroquinate synthase.